Reading from the N-terminus, the 766-residue chain is 5-methyltetrahydropteroyltriglutamate--homocysteine methyltransferase (766 aa).

5-methyltetrahydropteroyltri-L-glutamate-binding positions include 16–19 (RELK) and K122. L-homocysteine is bound by residues 443-445 (IGS) and E496. Residues 443-445 (IGS) and E496 contribute to the L-methionine site. 5-methyltetrahydropteroyltri-L-glutamate is bound by residues 527–528 (RC) and W573. Residue D611 participates in L-homocysteine binding. D611 contributes to the L-methionine binding site. E617 is a 5-methyltetrahydropteroyltri-L-glutamate binding site. Zn(2+)-binding residues include H653, C655, and E677. Catalysis depends on H706, which acts as the Proton donor. Residue C738 coordinates Zn(2+).

It belongs to the vitamin-B12 independent methionine synthase family. Zn(2+) is required as a cofactor.

It catalyses the reaction 5-methyltetrahydropteroyltri-L-glutamate + L-homocysteine = tetrahydropteroyltri-L-glutamate + L-methionine. Its pathway is amino-acid biosynthesis; L-methionine biosynthesis via de novo pathway; L-methionine from L-homocysteine (MetE route): step 1/1. Functionally, catalyzes the transfer of a methyl group from 5-methyltetrahydrofolate to homocysteine resulting in methionine formation. This chain is 5-methyltetrahydropteroyltriglutamate--homocysteine methyltransferase, found in Pseudomonas putida (strain W619).